Reading from the N-terminus, the 171-residue chain is Ly6/PLAUR domain-containing protein 6 (171 aa).

The N-terminal stretch at 1-25 is a signal peptide; the sequence is MEPSPALAWLLLLSLVADCLKAAQS. The 95-residue stretch at 47–141 folds into the UPAR/Ly6 domain; sequence FKCFTCEKAA…PRNDTDATFA (95 aa). Cystine bridges form between Cys-49-Cys-77, Cys-52-Cys-61, Cys-70-Cys-96, Cys-102-Cys-121, Cys-107-Cys-118, and Cys-122-Cys-127. A NxI motif motif is present at residues 88 to 90; sequence NSI. Asn-134 and Asn-147 each carry an N-linked (GlcNAc...) asparagine glycan. Asn-147 is lipidated: GPI-anchor amidated asparagine. The propeptide at 148–171 is removed in mature form; sequence QTNGHPHCVSVIVSCLWVWLGLTL.

As to quaternary structure, interacts with nicotinic acetylcholine receptors (nAChRs) including CHRNA3, CHRNA4, CHRNA5, CHRNA6, CHRNA7, CHRNB2 and CHRNB4. Interacts (via NxI motif) with LRP6. Expressed at high levels in the cortex and cerebellum of the brain, at moderate levels in the lung, kidney, and liver, and at low levels in the heart and prostate (at protein level). Expressed in neurons (at protein level).

It localises to the secreted. It is found in the cytoplasm. Its subcellular location is the cell membrane. The protein resides in the synapse. The protein localises to the synaptosome. It localises to the membrane raft. It is found in the cell projection. Its subcellular location is the dendrite. The protein resides in the perikaryon. Its function is as follows. Acts as a modulator of nicotinic acetylcholine receptors (nAChRs) function in the brain. Inhibits nicotine-induced Ca(2+) influx through nAChRs. In vitro, specifically inhibits alpha-3:beta-4 and alpha-7 nAChR currents in an allosteric manner. Acts as a positive regulator of Wnt/beta-catenin signaling. The chain is Ly6/PLAUR domain-containing protein 6 (Lypd6) from Rattus norvegicus (Rat).